The chain runs to 637 residues: ATP-dependent zinc metalloprotease FtsH (637 aa).

Over 1-7 (MNRVFRN) the chain is Cytoplasmic. Residues 8–28 (TIFYLLILLVVIGVVSYFQTS) form a helical membrane-spanning segment. Residues 29–109 (NPKTENMSYS…VEPAQETSGW (81 aa)) are Extracellular-facing. The chain crosses the membrane as a helical span at residues 110 to 130 (VTFLTTIIPFVIIFILFFFLL). At 131–637 (NQAQGGGSRV…TEEKKDDTKE (507 aa)) the chain is on the cytoplasmic side. An ATP-binding site is contributed by 201-208 (GPPGTGKT). Histidine 423 provides a ligand contact to Zn(2+). Glutamate 424 is a catalytic residue. The Zn(2+) site is built by histidine 427 and aspartate 499. The segment at 514–637 (FGMSEKLGPL…TEEKKDDTKE (124 aa)) is not necessary for FtsH function.

In the central section; belongs to the AAA ATPase family. This sequence in the C-terminal section; belongs to the peptidase M41 family. Homohexamer. Interacts with FloT at midcell. Interacts with FloA at midcell. Another study shows only minor colocalization with FloA or FloT. It depends on Zn(2+) as a cofactor.

The protein localises to the cell membrane. The protein resides in the membrane raft. Acts as a processive, ATP-dependent zinc metallopeptidase for both cytoplasmic and membrane proteins. Plays a role in the quality control of integral membrane proteins. Its function is as follows. In vitro partially degrades Spo0E, the phosphatase that acts on Spo0A-P. Recognition requires the last 14 residues of Spo0E. Its stabile accumulation requires FlotA and Flot. May degrade EzrA. This chain is ATP-dependent zinc metalloprotease FtsH, found in Bacillus subtilis (strain 168).